Consider the following 376-residue polypeptide: Methionine import ATP-binding protein MetN 2 (376 aa).

An ABC transporter domain is found at 34 to 273 (VRFINLGKTY…PQHDVSKTLL (240 aa)). 70 to 77 (GRSGAGKS) contacts ATP.

This sequence belongs to the ABC transporter superfamily. Methionine importer (TC 3.A.1.24) family. As to quaternary structure, the complex is composed of two ATP-binding proteins (MetN), two transmembrane proteins (MetI) and a solute-binding protein (MetQ).

The protein localises to the cell inner membrane. It carries out the reaction L-methionine(out) + ATP + H2O = L-methionine(in) + ADP + phosphate + H(+). The enzyme catalyses D-methionine(out) + ATP + H2O = D-methionine(in) + ADP + phosphate + H(+). In terms of biological role, part of the ABC transporter complex MetNIQ involved in methionine import. Responsible for energy coupling to the transport system. The chain is Methionine import ATP-binding protein MetN 2 from Pseudomonas savastanoi pv. phaseolicola (strain 1448A / Race 6) (Pseudomonas syringae pv. phaseolicola (strain 1448A / Race 6)).